A 105-amino-acid chain; its full sequence is Large ribosomal subunit protein eL30 (105 aa).

Glycyl lysine isopeptide (Lys-Gly) (interchain with G-Cter in ubiquitin) cross-links involve residues K22, K53, and K83.

Belongs to the eukaryotic ribosomal protein eL30 family. Component of the large ribosomal subunit (LSU). Mature yeast ribosomes consist of a small (40S) and a large (60S) subunit. The 40S small subunit contains 1 molecule of ribosomal RNA (18S rRNA) and 33 different proteins (encoded by 57 genes). The large 60S subunit contains 3 rRNA molecules (25S, 5.8S and 5S rRNA) and 46 different proteins (encoded by 81 genes).

The protein resides in the cytoplasm. Component of the ribosome, a large ribonucleoprotein complex responsible for the synthesis of proteins in the cell. The small ribosomal subunit (SSU) binds messenger RNAs (mRNAs) and translates the encoded message by selecting cognate aminoacyl-transfer RNA (tRNA) molecules. The large subunit (LSU) contains the ribosomal catalytic site termed the peptidyl transferase center (PTC), which catalyzes the formation of peptide bonds, thereby polymerizing the amino acids delivered by tRNAs into a polypeptide chain. The nascent polypeptides leave the ribosome through a tunnel in the LSU and interact with protein factors that function in enzymatic processing, targeting, and the membrane insertion of nascent chains at the exit of the ribosomal tunnel. The polypeptide is Large ribosomal subunit protein eL30 (Saccharomyces cerevisiae (strain ATCC 204508 / S288c) (Baker's yeast)).